Consider the following 448-residue polypeptide: FAD-linked oxidoreductase nodO (448 aa).

An FAD-binding PCMH-type domain is found at 35–206; it reads PEHFPLAIVK…IRFFLKTCPL (172 aa).

Belongs to the oxygen-dependent FAD-linked oxidoreductase family. FAD is required as a cofactor.

Its pathway is secondary metabolite biosynthesis. Its function is as follows. FAD-linked oxidoreductase; part of the gene cluster that mediates the biosynthesis of the indole diterpenes nodulisporic acids (NA). Nodulisporic acid A (NAA) and its chemically modified derivatives are of particular significance because of their highly potent insecticidal activity against blood-feeding arthropods and lack of observable adverse effects on mammals, in particular the tremogenicity associated with the paspaline-derived IDTs is not observed. The geranylgeranyl diphosphate (GGPP) synthase ggs1, localized outside of the cluster, is proposed to catalyze the first step in nodulisporic acid biosynthesis via conversion of farnesyl pyrophosphate and isopentyl pyrophosphate into geranylgeranyl pyrophosphate (GGPP). Condensation of indole-3-glycerol phosphate with GGPP by the prenyl transferase nodC then forms 3-geranylgeranylindole (3-GGI). Epoxidation by the FAD-dependent monooxygenase nodM leads to a single-epoxidized-GGI that is substrate of the terpene cyclase nodB for cyclization to yield emindole SB. The terminal methyl carbon, C28, of emindole SB is then oxidized by the cytochrome P450 monooxygenase nodW to produce nodulisporic acid F (NAF), the pentacyclic core of NAA. NAF is converted to nodulisporic acid E (NAE) via prenylation. This step is probably performed by one of the indole diterpene prenyltransferases nodD1 or nodD2. Several oxidation steps performed by the FAD-linked oxidoreductase nodO and one of the cytochrome P450 monooxygenase nodR, nodX or nodZ further convert NAE to nodulisporic acid D (NAD). NAD is substrate of cytochrome P450 monooxygenase nodJ to produce the precursor of nodulisporic acid C (NAC), converted to NAC by one of the indole diterpene prenyltransferases nodD1 or nodD2. The FAD-dependent monooxygenase nodY2 then oxidizes NAC to nodulisporic acid B (NAB). Finally NAB is converted to NAA by one of the cytochrome P450 monooxygenases nodR, nodX or nodZ. The sequence is that of FAD-linked oxidoreductase nodO from Hypoxylon pulicicidum.